Consider the following 1215-residue polypeptide: Zinc finger E-box-binding homeobox 2 (1215 aa).

Residues 1–111 (MKQPIMADGP…ILQASVAGPE (111 aa)) form a disordered region. A compositionally biased stretch (basic residues) spans 12–24 (CKRRKQANPRRKN). Over residues 57–74 (DQDTSPASMPNHESSPHM) the composition is skewed to polar residues. A compositionally biased stretch (basic and acidic residues) spans 89-98 (RESVVEHSWH). Serine 142 is subject to Phosphoserine. 3 C2H2-type zinc fingers span residues 211-234 (LTCP…KYRH), 241-263 (FSCP…MVTH), and 282-304 (FKCT…LRIH). The C2H2-type 4; atypical zinc finger occupies 310 to 334 (YECPNCKKRFSHSGSYSSHISSKKC). 3 positions are modified to phosphoserine: serine 356, serine 360, and serine 364. An N6-acetyllysine modification is found at lysine 377. Lysine 391 participates in a covalent cross-link: Glycyl lysine isopeptide (Lys-Gly) (interchain with G-Cter in SUMO); alternate. Residue lysine 391 forms a Glycyl lysine isopeptide (Lys-Gly) (interchain with G-Cter in SUMO2); alternate linkage. Positions 437-487 (QHLGVGMEAPLLGFPTMNSNLSEVQKVLQIVDNTVSRQKMDCKTEDISKLK) are SMAD-MH2 binding domain. Glycyl lysine isopeptide (Lys-Gly) (interchain with G-Cter in SUMO2) cross-links involve residues lysine 479 and lysine 555. The C2H2-type 5; degenerate zinc-finger motif lies at 581–605 (FSCQFCKESFPGPIPLHQHERYLCK). Residues lysine 611 and lysine 632 each participate in a glycyl lysine isopeptide (Lys-Gly) (interchain with G-Cter in SUMO2) cross-link. A DNA-binding region (homeobox; atypical) is located at residues 644-703 (GLTSPINPYKDHMSVLKAYYAMNMEPNSDELLKISIAVGLPQEFVKEWFEQRKVYQYSNS). Residue serine 647 is modified to Phosphoserine. Disordered regions lie at residues 702 to 740 (NSRS…DSIT) and 772 to 811 (VDKL…SEEL). A Glycyl lysine isopeptide (Lys-Gly) (interchain with G-Cter in SUMO2) cross-link involves residue lysine 713. Residues serine 731 and serine 780 each carry the phosphoserine modification. The segment covering 780–808 (SNTPSPLNLSSTSSKNSHSSSYTPNSFSS) has biased composition (low complexity). At threonine 782 the chain carries Phosphothreonine. Serine 784 is subject to Phosphoserine. A Glycyl lysine isopeptide (Lys-Gly) (interchain with G-Cter in SUMO); alternate cross-link involves residue lysine 866. Lysine 866 is covalently cross-linked (Glycyl lysine isopeptide (Lys-Gly) (interchain with G-Cter in SUMO2); alternate). 2 C2H2-type zinc fingers span residues 999–1021 (YACD…KYEH) and 1027–1049 (HQCQ…SRLH). The C2H2-type 8; atypical zinc-finger motif lies at 1055–1076 (YQCDKCGKRFSHSGSYSQHMNH). The tract at residues 1117–1215 (TPQGYSDSEE…EEDNMEDGME (99 aa)) is disordered. 2 positions are modified to phosphoserine: serine 1122 and serine 1124. Basic and acidic residues predominate over residues 1127-1149 (RESMPRDGESEKEHEKEGEEGYG). Over residues 1157–1167 (DEEEEEEEEES) the composition is skewed to acidic residues. Composition is skewed to basic and acidic residues over residues 1168-1179 (ENKSMDTDPETI) and 1186-1205 (GDHS…KSDH). Phosphoserine is present on serine 1203. Positions 1206–1215 (EEDNMEDGME) are enriched in acidic residues.

It belongs to the delta-EF1/ZFH-1 C2H2-type zinc-finger family. As to quaternary structure, interacts with CBX4 and CTBP1. Binds activated SMAD1, activated SMAD2 and activated SMAD3; binding with SMAD4 is not detected. Post-translationally, sumoylation on Lys-391 and Lys-866 is promoted by the E3 SUMO-protein ligase CBX4, and impairs interaction with CTBP1 and transcription repression activity.

The protein resides in the nucleus. The protein localises to the chromosome. Transcriptional inhibitor that binds to DNA sequence 5'-CACCT-3' in different promoters. Represses transcription of E-cadherin. Represses expression of MEOX2. This chain is Zinc finger E-box-binding homeobox 2 (Zeb2), found in Mus musculus (Mouse).